The primary structure comprises 300 residues: Tegument protein VP22 (300 aa).

A disordered region spans residues Met1–Ala148. Basic and acidic residues-rich tracts occupy residues Cys10–Leu22 and Pro50–Glu61. Positions Gly163–Lys166 match the Nuclear localization signal motif. An interaction with gE region spans residues Lys174–Val267. The short motif at Leu232 to Thr244 is the Nuclear export signal element. Positions Ala269–Ala292 are enriched in low complexity. Residues Ala269–Glu300 form a disordered region.

The protein belongs to the alphaherpesvirinae VP22 tegument protein family. Interacts with gE (via C-terminus); this interaction is necessary for the recruitment of VP22 to the Golgi and its packaging into virions. Interacts with gM (via C-terminus). Interacts with VP16; this interaction allows the formation of a tripartite complex composed of VP16, VP22 and UL41/VHS. Interacts with the capsid-binding protein UL16. Interacts with host CGAS. In terms of processing, highly phosphorylated in the host cell. Packaging is selective for underphosphorylated forms.

It is found in the virion tegument. It localises to the host cytoplasm. The protein localises to the host nucleus. Its subcellular location is the host Golgi apparatus. Functionally, tegument protein that plays different roles during the time course of infection. Participates in both the accumulation of viral mRNAs and viral protein translation at late time of infection. Modulates the RNase activity of the virion host shutoff protein UL41 probably to ensure necessary levels of key cellular mRNAs and proteins. Plays a role in microtubule reorganization that occurs after viral infection by stabilizing microtubule network. Plays a role in the inhibition of host innate immune system by targeting the CGAS enzymatic activity which is the principal cytosolic DNA sensor that detects invading viral DNA. Acts by mediating disruption of liquid-like droplets in which CGAS is activated, thereby preventing CGAS activity. The sequence is that of Tegument protein VP22 from Homo sapiens (Human).